The chain runs to 122 residues: Ribosome-binding factor A (122 aa).

Belongs to the RbfA family. Monomer. Binds 30S ribosomal subunits, but not 50S ribosomal subunits or 70S ribosomes.

The protein localises to the cytoplasm. In terms of biological role, one of several proteins that assist in the late maturation steps of the functional core of the 30S ribosomal subunit. Associates with free 30S ribosomal subunits (but not with 30S subunits that are part of 70S ribosomes or polysomes). Required for efficient processing of 16S rRNA. May interact with the 5'-terminal helix region of 16S rRNA. This is Ribosome-binding factor A from Halothermothrix orenii (strain H 168 / OCM 544 / DSM 9562).